A 151-amino-acid polypeptide reads, in one-letter code: Deoxyuridine 5'-triphosphate nucleotidohydrolase (151 aa).

Substrate is bound by residues 70 to 72 (RSG), Asn-83, 87 to 89 (LID), and Met-97.

The protein belongs to the dUTPase family. Homotrimer. Mg(2+) serves as cofactor.

It catalyses the reaction dUTP + H2O = dUMP + diphosphate + H(+). It participates in pyrimidine metabolism; dUMP biosynthesis; dUMP from dCTP (dUTP route): step 2/2. In terms of biological role, this enzyme is involved in nucleotide metabolism: it produces dUMP, the immediate precursor of thymidine nucleotides and it decreases the intracellular concentration of dUTP so that uracil cannot be incorporated into DNA. In Escherichia coli O7:K1 (strain IAI39 / ExPEC), this protein is Deoxyuridine 5'-triphosphate nucleotidohydrolase.